The primary structure comprises 350 residues: 4-hydroxy-3-methylbut-2-enyl diphosphate reductase (350 aa).

Cysteine 36 lines the [4Fe-4S] cluster pocket. Residues histidine 65 and histidine 101 each coordinate (2E)-4-hydroxy-3-methylbut-2-enyl diphosphate. Residues histidine 65 and histidine 101 each coordinate dimethylallyl diphosphate. Isopentenyl diphosphate is bound by residues histidine 65 and histidine 101. Cysteine 123 is a binding site for [4Fe-4S] cluster. A (2E)-4-hydroxy-3-methylbut-2-enyl diphosphate-binding site is contributed by histidine 151. Dimethylallyl diphosphate is bound at residue histidine 151. Isopentenyl diphosphate is bound at residue histidine 151. The active-site Proton donor is the glutamate 153. Residue threonine 192 participates in (2E)-4-hydroxy-3-methylbut-2-enyl diphosphate binding. A [4Fe-4S] cluster-binding site is contributed by cysteine 222. The (2E)-4-hydroxy-3-methylbut-2-enyl diphosphate site is built by serine 250, serine 251, asparagine 252, and serine 295. Residues serine 250, serine 251, asparagine 252, and serine 295 each coordinate dimethylallyl diphosphate. Isopentenyl diphosphate is bound by residues serine 250, serine 251, asparagine 252, and serine 295.

The protein belongs to the IspH family. Requires [4Fe-4S] cluster as cofactor.

It catalyses the reaction isopentenyl diphosphate + 2 oxidized [2Fe-2S]-[ferredoxin] + H2O = (2E)-4-hydroxy-3-methylbut-2-enyl diphosphate + 2 reduced [2Fe-2S]-[ferredoxin] + 2 H(+). The catalysed reaction is dimethylallyl diphosphate + 2 oxidized [2Fe-2S]-[ferredoxin] + H2O = (2E)-4-hydroxy-3-methylbut-2-enyl diphosphate + 2 reduced [2Fe-2S]-[ferredoxin] + 2 H(+). It participates in isoprenoid biosynthesis; dimethylallyl diphosphate biosynthesis; dimethylallyl diphosphate from (2E)-4-hydroxy-3-methylbutenyl diphosphate: step 1/1. It functions in the pathway isoprenoid biosynthesis; isopentenyl diphosphate biosynthesis via DXP pathway; isopentenyl diphosphate from 1-deoxy-D-xylulose 5-phosphate: step 6/6. Functionally, catalyzes the conversion of 1-hydroxy-2-methyl-2-(E)-butenyl 4-diphosphate (HMBPP) into a mixture of isopentenyl diphosphate (IPP) and dimethylallyl diphosphate (DMAPP). Acts in the terminal step of the DOXP/MEP pathway for isoprenoid precursor biosynthesis. The protein is 4-hydroxy-3-methylbut-2-enyl diphosphate reductase of Rhizobium meliloti (strain 1021) (Ensifer meliloti).